Reading from the N-terminus, the 274-residue chain is NADPH-dependent 7-cyano-7-deazaguanine reductase (274 aa).

80–82 (VES) is a substrate binding site. 82–83 (SK) serves as a coordination point for NADPH. Cysteine 181 serves as the catalytic Thioimide intermediate. Residue aspartate 188 is the Proton donor of the active site. 220–221 (HE) is a binding site for substrate. Position 249–250 (249–250 (RG)) interacts with NADPH.

This sequence belongs to the GTP cyclohydrolase I family. QueF type 2 subfamily. As to quaternary structure, homodimer.

Its subcellular location is the cytoplasm. The enzyme catalyses 7-aminomethyl-7-carbaguanine + 2 NADP(+) = 7-cyano-7-deazaguanine + 2 NADPH + 3 H(+). It functions in the pathway tRNA modification; tRNA-queuosine biosynthesis. In terms of biological role, catalyzes the NADPH-dependent reduction of 7-cyano-7-deazaguanine (preQ0) to 7-aminomethyl-7-deazaguanine (preQ1). This Burkholderia mallei (strain NCTC 10247) protein is NADPH-dependent 7-cyano-7-deazaguanine reductase.